A 315-amino-acid polypeptide reads, in one-letter code: Olfactory receptor 10H2 (315 aa).

The Extracellular portion of the chain corresponds to Met-1–Leu-25. N-linked (GlcNAc...) asparagine glycosylation occurs at Asn-5. A helical transmembrane segment spans residues Met-26–Met-46. At Ala-47–Ser-54 the chain is on the cytoplasmic side. The helical transmembrane segment at Leu-55 to Val-75 threads the bilayer. The Extracellular segment spans residues Ala-76 to Ser-99. Cys-97 and Cys-189 are joined by a disulfide. The chain crosses the membrane as a helical span at residues Gln-100–Tyr-120. Topologically, residues Asp-121–Arg-139 are cytoplasmic. Residues Gly-140 to Thr-160 form a helical membrane-spanning segment. Residues Ser-161–Ala-197 lie on the Extracellular side of the membrane. The helical transmembrane segment at Leu-198–Ser-218 threads the bilayer. The Cytoplasmic portion of the chain corresponds to Tyr-219 to Ala-238. A helical membrane pass occupies residues Phe-239 to Ile-259. The Extracellular portion of the chain corresponds to Tyr-260–Asp-272. The helical transmembrane segment at Thr-273–Leu-293 threads the bilayer. Topologically, residues Arg-294 to Thr-315 are cytoplasmic.

It belongs to the G-protein coupled receptor 1 family.

It is found in the cell membrane. Odorant receptor. In Homo sapiens (Human), this protein is Olfactory receptor 10H2 (OR10H2).